The primary structure comprises 74 residues: Conotoxin VxVIA (74 aa).

The first 22 residues, 1–22 (MKLTCVLIIAVLFLTAYQLATA), serve as a signal peptide directing secretion. Residues 23 to 47 (ASHAKGKQKHRALRPADKHFRFTKR) constitute a propeptide that is removed on maturation. Cystine bridges form between Cys48-Cys62, Cys55-Cys66, and Cys61-Cys73.

In terms of tissue distribution, expressed by the venom duct.

The protein resides in the secreted. Functionally, when injected intracranially in mice, induces a series of symptoms such as quivering, climbing, scratching, barrel rolling and paralysis of limbs. Unexpectedly, no effect is observed on ionic currents when tested on locust DUM neuron. This Conus vexillum (Flag cone) protein is Conotoxin VxVIA.